Here is a 155-residue protein sequence, read N- to C-terminus: MAKGEGNVLAQHKKARHDYHIVETVEAGIVLTGTEIKSVRAARIQLKDGFAQIKNGEAWLVNVHIAPFEQGNIWNADPERTRKLLLKKREIQHLADELKGTGMTLIPLKVYLKDGFAKVLIGLAKGKHDYDKRESIKRREQDRDIRRVMKSVNRR.

It belongs to the SmpB family.

It is found in the cytoplasm. Functionally, required for rescue of stalled ribosomes mediated by trans-translation. Binds to transfer-messenger RNA (tmRNA), required for stable association of tmRNA with ribosomes. tmRNA and SmpB together mimic tRNA shape, replacing the anticodon stem-loop with SmpB. tmRNA is encoded by the ssrA gene; the 2 termini fold to resemble tRNA(Ala) and it encodes a 'tag peptide', a short internal open reading frame. During trans-translation Ala-aminoacylated tmRNA acts like a tRNA, entering the A-site of stalled ribosomes, displacing the stalled mRNA. The ribosome then switches to translate the ORF on the tmRNA; the nascent peptide is terminated with the 'tag peptide' encoded by the tmRNA and targeted for degradation. The ribosome is freed to recommence translation, which seems to be the essential function of trans-translation. The protein is SsrA-binding protein of Streptococcus equi subsp. equi (strain 4047).